The chain runs to 481 residues: tRNA-2-methylthio-N(6)-dimethylallyladenosine synthase (481 aa).

One can recognise an MTTase N-terminal domain in the interval 24–140 (KKLFIESYGC…LPNLLAEVEE (117 aa)). Residues C33, C69, C103, C178, C182, and C185 each contribute to the [4Fe-4S] cluster site. The 248-residue stretch at 164-411 (MSNGITALVS…DLQQKHAWFR (248 aa)) folds into the Radical SAM core domain. The region spanning 413 to 476 (EEFVGKTVEV…SGTLKGEAVG (64 aa)) is the TRAM domain.

Belongs to the methylthiotransferase family. MiaB subfamily. Monomer. Requires [4Fe-4S] cluster as cofactor.

The protein localises to the cytoplasm. The catalysed reaction is N(6)-dimethylallyladenosine(37) in tRNA + (sulfur carrier)-SH + AH2 + 2 S-adenosyl-L-methionine = 2-methylsulfanyl-N(6)-dimethylallyladenosine(37) in tRNA + (sulfur carrier)-H + 5'-deoxyadenosine + L-methionine + A + S-adenosyl-L-homocysteine + 2 H(+). Its function is as follows. Catalyzes the methylthiolation of N6-(dimethylallyl)adenosine (i(6)A), leading to the formation of 2-methylthio-N6-(dimethylallyl)adenosine (ms(2)i(6)A) at position 37 in tRNAs that read codons beginning with uridine. The sequence is that of tRNA-2-methylthio-N(6)-dimethylallyladenosine synthase from Flavobacterium johnsoniae (strain ATCC 17061 / DSM 2064 / JCM 8514 / BCRC 14874 / CCUG 350202 / NBRC 14942 / NCIMB 11054 / UW101) (Cytophaga johnsonae).